The chain runs to 424 residues: Histidine--tRNA ligase (424 aa).

Belongs to the class-II aminoacyl-tRNA synthetase family. Homodimer.

The protein localises to the cytoplasm. It carries out the reaction tRNA(His) + L-histidine + ATP = L-histidyl-tRNA(His) + AMP + diphosphate + H(+). This chain is Histidine--tRNA ligase, found in Shewanella pealeana (strain ATCC 700345 / ANG-SQ1).